A 365-amino-acid chain; its full sequence is Chorismate synthase (365 aa).

Residue R46 participates in NADP(+) binding. FMN contacts are provided by residues 124 to 126 (RAS), G284, 299 to 303 (KPTPS), and R326.

Belongs to the chorismate synthase family. FMNH2 serves as cofactor.

The enzyme catalyses 5-O-(1-carboxyvinyl)-3-phosphoshikimate = chorismate + phosphate. The protein operates within metabolic intermediate biosynthesis; chorismate biosynthesis; chorismate from D-erythrose 4-phosphate and phosphoenolpyruvate: step 7/7. Functionally, catalyzes the anti-1,4-elimination of the C-3 phosphate and the C-6 proR hydrogen from 5-enolpyruvylshikimate-3-phosphate (EPSP) to yield chorismate, which is the branch point compound that serves as the starting substrate for the three terminal pathways of aromatic amino acid biosynthesis. This reaction introduces a second double bond into the aromatic ring system. The sequence is that of Chorismate synthase from Pyrobaculum islandicum (strain DSM 4184 / JCM 9189 / GEO3).